The primary structure comprises 108 residues: Large ribosomal subunit protein uL23 (108 aa).

This sequence belongs to the universal ribosomal protein uL23 family. As to quaternary structure, part of the 50S ribosomal subunit. Contacts protein L29, and trigger factor when it is bound to the ribosome.

Functionally, one of the early assembly proteins it binds 23S rRNA. One of the proteins that surrounds the polypeptide exit tunnel on the outside of the ribosome. Forms the main docking site for trigger factor binding to the ribosome. This Mycoplasmoides gallisepticum (strain R(low / passage 15 / clone 2)) (Mycoplasma gallisepticum) protein is Large ribosomal subunit protein uL23.